The following is a 126-amino-acid chain: MARIAGVDLPRDKRVEIGLTYIYGIGLSRSQEIIAATGVNPDTRVKDLSDADVAALRGEVESNYQVEGDLRRLEAMNIKRLVDIGTYRGRRHRMGLPVRGQRTRTNARTRRGRRQTVAGKKKAPGK.

A disordered region spans residues 92 to 126 (HRMGLPVRGQRTRTNARTRRGRRQTVAGKKKAPGK). Residues 101-126 (QRTRTNARTRRGRRQTVAGKKKAPGK) are compositionally biased toward basic residues.

Belongs to the universal ribosomal protein uS13 family. In terms of assembly, part of the 30S ribosomal subunit. Forms a loose heterodimer with protein S19. Forms two bridges to the 50S subunit in the 70S ribosome.

Located at the top of the head of the 30S subunit, it contacts several helices of the 16S rRNA. In the 70S ribosome it contacts the 23S rRNA (bridge B1a) and protein L5 of the 50S subunit (bridge B1b), connecting the 2 subunits; these bridges are implicated in subunit movement. Contacts the tRNAs in the A and P-sites. In Nostoc sp. (strain PCC 7120 / SAG 25.82 / UTEX 2576), this protein is Small ribosomal subunit protein uS13.